The chain runs to 309 residues: Ribosomal protein L11 methyltransferase (309 aa).

S-adenosyl-L-methionine contacts are provided by T152, G178, D200, and N242.

It belongs to the methyltransferase superfamily. PrmA family.

It localises to the cytoplasm. It carries out the reaction L-lysyl-[protein] + 3 S-adenosyl-L-methionine = N(6),N(6),N(6)-trimethyl-L-lysyl-[protein] + 3 S-adenosyl-L-homocysteine + 3 H(+). In terms of biological role, methylates ribosomal protein L11. This is Ribosomal protein L11 methyltransferase from Pelobacter propionicus (strain DSM 2379 / NBRC 103807 / OttBd1).